The following is a 324-amino-acid chain: Beta-ketoacyl-[acyl-carrier-protein] synthase III (324 aa).

Active-site residues include cysteine 116 and histidine 251. The interval 252–256 is ACP-binding; the sequence is QANLR. Asparagine 281 is a catalytic residue.

Belongs to the thiolase-like superfamily. FabH family. In terms of assembly, homodimer.

The protein resides in the cytoplasm. It catalyses the reaction malonyl-[ACP] + acetyl-CoA + H(+) = 3-oxobutanoyl-[ACP] + CO2 + CoA. It functions in the pathway lipid metabolism; fatty acid biosynthesis. In terms of biological role, catalyzes the condensation reaction of fatty acid synthesis by the addition to an acyl acceptor of two carbons from malonyl-ACP. Catalyzes the first condensation reaction which initiates fatty acid synthesis and may therefore play a role in governing the total rate of fatty acid production. Possesses both acetoacetyl-ACP synthase and acetyl transacylase activities. Its substrate specificity determines the biosynthesis of branched-chain and/or straight-chain of fatty acids. The chain is Beta-ketoacyl-[acyl-carrier-protein] synthase III from Xylella fastidiosa (strain Temecula1 / ATCC 700964).